The chain runs to 190 residues: Imidazoleglycerol-phosphate dehydratase (190 aa).

It belongs to the imidazoleglycerol-phosphate dehydratase family.

It is found in the cytoplasm. It catalyses the reaction D-erythro-1-(imidazol-4-yl)glycerol 3-phosphate = 3-(imidazol-4-yl)-2-oxopropyl phosphate + H2O. Its pathway is amino-acid biosynthesis; L-histidine biosynthesis; L-histidine from 5-phospho-alpha-D-ribose 1-diphosphate: step 6/9. The chain is Imidazoleglycerol-phosphate dehydratase from Campylobacter fetus subsp. fetus (strain 82-40).